We begin with the raw amino-acid sequence, 277 residues long: Digeranylgeranylglyceryl phosphate synthase (277 aa).

A run of 7 helical transmembrane segments spans residues 13-33, 40-60, 89-109, 143-163, 199-219, 220-240, and 256-276; these read PGNAVAAGGLTFIGAFVAGGL, AFAVVATVLATGAGNAINDYF, VALFAVAVVLTLLLPWLAIAI, FLYGGAAVGGDLAAVVVLFAL, RSLYVAAGFVVVAVLSSPLPY, LLGLFGWVYLVVLVPALCGLA, and WLKASMFAAAVAFVIGRLAVV.

This sequence belongs to the UbiA prenyltransferase family. DGGGP synthase subfamily. Mg(2+) is required as a cofactor.

The protein localises to the cell membrane. The catalysed reaction is sn-3-O-(geranylgeranyl)glycerol 1-phosphate + (2E,6E,10E)-geranylgeranyl diphosphate = 2,3-bis-O-(geranylgeranyl)-sn-glycerol 1-phosphate + diphosphate. The protein operates within membrane lipid metabolism; glycerophospholipid metabolism. Prenyltransferase that catalyzes the transfer of the geranylgeranyl moiety of geranylgeranyl diphosphate (GGPP) to the C2 hydroxyl of (S)-3-O-geranylgeranylglyceryl phosphate (GGGP). This reaction is the second ether-bond-formation step in the biosynthesis of archaeal membrane lipids. This Natronomonas pharaonis (strain ATCC 35678 / DSM 2160 / CIP 103997 / JCM 8858 / NBRC 14720 / NCIMB 2260 / Gabara) (Halobacterium pharaonis) protein is Digeranylgeranylglyceryl phosphate synthase.